A 182-amino-acid chain; its full sequence is uncharacterized protein (182 aa).

Disordered stretches follow at residues 1-49 (MAAP…DGGS) and 126-171 (QGGH…VHAQ). Residues 17–39 (ELLEKAARLERGPPPRGDPEAVG) show a composition bias toward basic and acidic residues.

This is an uncharacterized protein from Homo sapiens (Human).